The primary structure comprises 408 residues: S-adenosylmethionine synthase (408 aa).

His19 serves as a coordination point for ATP. Asp21 is a binding site for Mg(2+). Position 47 (Glu47) interacts with K(+). Residues Glu60 and Gln104 each contribute to the L-methionine site. Residues 104 to 114 form a flexible loop region; it reads QSPEIASGVDH. ATP-binding positions include 185-187, 255-256, Asp264, 270-271, Ala287, and Lys291; these read DAK, RF, and RK. Asp264 contributes to the L-methionine binding site. Position 295 (Lys295) interacts with L-methionine.

It belongs to the AdoMet synthase family. Homotetramer; dimer of dimers. The cofactor is Mg(2+). K(+) serves as cofactor.

The protein resides in the cytoplasm. The enzyme catalyses L-methionine + ATP + H2O = S-adenosyl-L-methionine + phosphate + diphosphate. The protein operates within amino-acid biosynthesis; S-adenosyl-L-methionine biosynthesis; S-adenosyl-L-methionine from L-methionine: step 1/1. Catalyzes the formation of S-adenosylmethionine (AdoMet) from methionine and ATP. The overall synthetic reaction is composed of two sequential steps, AdoMet formation and the subsequent tripolyphosphate hydrolysis which occurs prior to release of AdoMet from the enzyme. This Deinococcus radiodurans (strain ATCC 13939 / DSM 20539 / JCM 16871 / CCUG 27074 / LMG 4051 / NBRC 15346 / NCIMB 9279 / VKM B-1422 / R1) protein is S-adenosylmethionine synthase.